Here is a 185-residue protein sequence, read N- to C-terminus: Ribosome-recycling factor (185 aa).

The protein belongs to the RRF family.

It is found in the cytoplasm. Functionally, responsible for the release of ribosomes from messenger RNA at the termination of protein biosynthesis. May increase the efficiency of translation by recycling ribosomes from one round of translation to another. This chain is Ribosome-recycling factor, found in Syntrophobacter fumaroxidans (strain DSM 10017 / MPOB).